A 227-amino-acid polypeptide reads, in one-letter code: uncharacterized protein (227 aa).

The first 25 residues, methionine 1–alanine 25, serve as a signal peptide directing secretion.

To R.conorii RC1281.

This is an uncharacterized protein from Rickettsia conorii (strain ATCC VR-613 / Malish 7).